We begin with the raw amino-acid sequence, 163 residues long: Protein-export protein SecB (163 aa).

Belongs to the SecB family. Homotetramer, a dimer of dimers. One homotetramer interacts with 1 SecA dimer.

It localises to the cytoplasm. In terms of biological role, one of the proteins required for the normal export of preproteins out of the cell cytoplasm. It is a molecular chaperone that binds to a subset of precursor proteins, maintaining them in a translocation-competent state. It also specifically binds to its receptor SecA. In Brucella canis (strain ATCC 23365 / NCTC 10854 / RM-666), this protein is Protein-export protein SecB.